The following is an 83-amino-acid chain: Exodeoxyribonuclease 7 small subunit (83 aa).

This sequence belongs to the XseB family. Heterooligomer composed of large and small subunits.

Its subcellular location is the cytoplasm. The catalysed reaction is Exonucleolytic cleavage in either 5'- to 3'- or 3'- to 5'-direction to yield nucleoside 5'-phosphates.. Its function is as follows. Bidirectionally degrades single-stranded DNA into large acid-insoluble oligonucleotides, which are then degraded further into small acid-soluble oligonucleotides. The chain is Exodeoxyribonuclease 7 small subunit from Bradyrhizobium sp. (strain ORS 278).